The primary structure comprises 308 residues: Ribosomal RNA small subunit methyltransferase H (308 aa).

S-adenosyl-L-methionine is bound by residues Gly-38–His-40, Asp-58, Phe-82, Asp-99, and Gln-106.

The protein belongs to the methyltransferase superfamily. RsmH family.

It is found in the cytoplasm. It catalyses the reaction cytidine(1402) in 16S rRNA + S-adenosyl-L-methionine = N(4)-methylcytidine(1402) in 16S rRNA + S-adenosyl-L-homocysteine + H(+). Functionally, specifically methylates the N4 position of cytidine in position 1402 (C1402) of 16S rRNA. This chain is Ribosomal RNA small subunit methyltransferase H, found in Acidovorax ebreus (strain TPSY) (Diaphorobacter sp. (strain TPSY)).